A 363-amino-acid chain; its full sequence is DNA polymerase IV (363 aa).

Positions 14-197 (IIHIDMDAFF…LPVEKFHGVG (184 aa)) constitute a UmuC domain. D18 and D115 together coordinate Mg(2+). Residue E116 is part of the active site.

Belongs to the DNA polymerase type-Y family. In terms of assembly, monomer. It depends on Mg(2+) as a cofactor.

The protein resides in the cytoplasm. The enzyme catalyses DNA(n) + a 2'-deoxyribonucleoside 5'-triphosphate = DNA(n+1) + diphosphate. In terms of biological role, poorly processive, error-prone DNA polymerase involved in untargeted mutagenesis. Copies undamaged DNA at stalled replication forks, which arise in vivo from mismatched or misaligned primer ends. These misaligned primers can be extended by PolIV. Exhibits no 3'-5' exonuclease (proofreading) activity. May be involved in translesional synthesis, in conjunction with the beta clamp from PolIII. The sequence is that of DNA polymerase IV from Lactococcus lactis subsp. lactis (strain IL1403) (Streptococcus lactis).